We begin with the raw amino-acid sequence, 245 residues long: 6-carboxyhexanoate--CoA ligase (245 aa).

It belongs to the BioW family. As to quaternary structure, homodimer. It depends on Mg(2+) as a cofactor.

It carries out the reaction heptanedioate + ATP + CoA = 6-carboxyhexanoyl-CoA + AMP + diphosphate. It participates in metabolic intermediate metabolism; pimeloyl-CoA biosynthesis; pimeloyl-CoA from pimelate: step 1/1. Functionally, catalyzes the transformation of pimelate into pimeloyl-CoA with concomitant hydrolysis of ATP to AMP. This Thermodesulfovibrio yellowstonii (strain ATCC 51303 / DSM 11347 / YP87) protein is 6-carboxyhexanoate--CoA ligase.